We begin with the raw amino-acid sequence, 253 residues long: Flap endonuclease Xni (253 aa).

Residue aspartate 105 coordinates Mg(2+). The region spanning 162-251 (ERHQLLDYIA…HLKLSDLRVN (90 aa)) is the 5'-3' exonuclease domain. K(+) contacts are provided by leucine 172, proline 181, isoleucine 183, and isoleucine 186. An interaction with DNA region spans residues 185–190 (GIGPKS).

The protein belongs to the Xni family. Requires Mg(2+) as cofactor. The cofactor is K(+).

Functionally, has flap endonuclease activity. During DNA replication, flap endonucleases cleave the 5'-overhanging flap structure that is generated by displacement synthesis when DNA polymerase encounters the 5'-end of a downstream Okazaki fragment. This is Flap endonuclease Xni from Shewanella amazonensis (strain ATCC BAA-1098 / SB2B).